We begin with the raw amino-acid sequence, 389 residues long: 26S proteasome non-ATPase regulatory subunit 6 (389 aa).

Positions 193–361 (DFKQAAELFL…EIVETNRPDS (169 aa)) constitute a PCI domain.

It belongs to the proteasome subunit S10 family. In terms of assembly, component of the 19S proteasome regulatory particle complex. The 26S proteasome consists of a 20S core particle (CP) and two 19S regulatory subunits (RP). The regulatory particle is made of a lid composed of 9 subunits including PSMD6, a base containing 6 ATPases and few additional components.

In terms of biological role, component of the 26S proteasome, a multiprotein complex involved in the ATP-dependent degradation of ubiquitinated proteins. This complex plays a key role in the maintenance of protein homeostasis by removing misfolded or damaged proteins, which could impair cellular functions, and by removing proteins whose functions are no longer required. Therefore, the proteasome participates in numerous cellular processes, including cell cycle progression, apoptosis, or DNA damage repair. This is 26S proteasome non-ATPase regulatory subunit 6 (PSMD6) from Homo sapiens (Human).